The sequence spans 172 residues: S-ribosylhomocysteine lyase (172 aa).

Positions 54, 58, and 128 each coordinate Fe cation.

This sequence belongs to the LuxS family. In terms of assembly, homodimer. The cofactor is Fe cation.

The catalysed reaction is S-(5-deoxy-D-ribos-5-yl)-L-homocysteine = (S)-4,5-dihydroxypentane-2,3-dione + L-homocysteine. Its function is as follows. Involved in the synthesis of autoinducer 2 (AI-2) which is secreted by bacteria and is used to communicate both the cell density and the metabolic potential of the environment. The regulation of gene expression in response to changes in cell density is called quorum sensing. Catalyzes the transformation of S-ribosylhomocysteine (RHC) to homocysteine (HC) and 4,5-dihydroxy-2,3-pentadione (DPD). The sequence is that of S-ribosylhomocysteine lyase from Vibrio vulnificus (strain CMCP6).